The sequence spans 443 residues: Glutamine synthetase (443 aa).

The GS beta-grasp domain maps to 16–97 (KRIKFVQLIF…VYGYIYKDGK (82 aa)). The 341-residue stretch at 103–443 (PRGVLRRTLE…EWELERYFFI (341 aa)) folds into the GS catalytic domain. Positions 126 and 128 each coordinate Mg(2+). E176 provides a ligand contact to ATP. E181 and E188 together coordinate Mg(2+). Residue G233 participates in L-glutamate binding. Residue H237 coordinates Mg(2+). Residues 239 to 241 (HIS) and S241 each bind ATP. L-glutamate is bound by residues R287, E293, and R305. Residues R305 and R310 each contribute to the ATP site. Residue E322 participates in Mg(2+) binding. Residue R324 participates in L-glutamate binding.

Belongs to the glutamine synthetase family. Oligomer of 12 subunits arranged in the form of two hexagons. It depends on Mg(2+) as a cofactor.

The protein localises to the cytoplasm. It carries out the reaction L-glutamate + NH4(+) + ATP = L-glutamine + ADP + phosphate + H(+). Its function is as follows. Probably involved in nitrogen metabolism via ammonium assimilation. Catalyzes the ATP-dependent biosynthesis of glutamine from glutamate and ammonia. The polypeptide is Glutamine synthetase (Pyrococcus horikoshii (strain ATCC 700860 / DSM 12428 / JCM 9974 / NBRC 100139 / OT-3)).